A 538-amino-acid chain; its full sequence is CWF19-like protein 1 (538 aa).

The disordered stretch occupies residues 298–324 (QGRKRSSTGRDSKSSPHPKQPRKPPQP).

The protein belongs to the CWF19 family. As to expression, expressed in many brain regions, including cerebellum, thalamus and occipital, parietal and temporal lobes (at protein level). Also expressed in the spinal cord (at protein level).

This is CWF19-like protein 1 (CWF19L1) from Homo sapiens (Human).